A 437-amino-acid chain; its full sequence is Adenylosuccinate synthetase (437 aa).

GTP-binding positions include 25–31 (GDEGKGK), 53–55 (GHT), and K62. The Proton acceptor role is filled by D26. Mg(2+) contacts are provided by D26 and G53. Residues 26–29 (DEGK) and 51–54 (NAGH) contribute to the IMP site. Residue H54 is the Proton donor of the active site. The IMP site is built by T141, R155, N232, and T247. T307 is a binding site for GTP. Residue 307–313 (TTTKRPR) participates in substrate binding. R311 contacts IMP. GTP is bound by residues R313, 339–341 (KLD), and 425–427 (GIG).

This sequence belongs to the adenylosuccinate synthetase family. Homodimer. Mg(2+) serves as cofactor.

Its subcellular location is the cytoplasm. The enzyme catalyses IMP + L-aspartate + GTP = N(6)-(1,2-dicarboxyethyl)-AMP + GDP + phosphate + 2 H(+). It participates in purine metabolism; AMP biosynthesis via de novo pathway; AMP from IMP: step 1/2. In terms of biological role, plays an important role in the salvage pathway for purine nucleotide biosynthesis. Catalyzes the first committed step in the biosynthesis of AMP from IMP. The chain is Adenylosuccinate synthetase from Plasmodium vivax (strain Salvador I).